Reading from the N-terminus, the 448-residue chain is Amino-acid acetyltransferase (448 aa).

The 139-residue stretch at 295 to 433 (EQIRRANIND…KQVLYNYQRR (139 aa)) folds into the N-acetyltransferase domain.

Belongs to the acetyltransferase family. ArgA subfamily. As to quaternary structure, homohexamer.

The protein resides in the cytoplasm. It carries out the reaction L-glutamate + acetyl-CoA = N-acetyl-L-glutamate + CoA + H(+). It participates in amino-acid biosynthesis; L-arginine biosynthesis; N(2)-acetyl-L-ornithine from L-glutamate: step 1/4. This Photorhabdus laumondii subsp. laumondii (strain DSM 15139 / CIP 105565 / TT01) (Photorhabdus luminescens subsp. laumondii) protein is Amino-acid acetyltransferase.